We begin with the raw amino-acid sequence, 408 residues long: Potassium channel subfamily K member 13 (408 aa).

Residues M1–R19 are Cytoplasmic-facing. A helical transmembrane segment spans residues F20 to A40. 2 N-linked (GlcNAc...) asparagine glycosylation sites follow: N59 and N65. The segment at residues W95–M115 is an intramembrane region (pore-forming). 3 residues coordinate K(+): T110, I111, and G112. Positions T110 to M115 are selectivity filter 1. Residues I125–F145 traverse the membrane as a helical segment. The Cytoplasmic segment spans residues L146–S193. A helical transmembrane segment spans residues V194 to A214. The pore-forming intramembrane region spans Y224–V244. Positions 237, 238, 239, and 240 each coordinate K(+). Residues T237 to D242 form a selectivity filter 2 region. A helical transmembrane segment spans residues V263 to I283. The Cytoplasmic portion of the chain corresponds to K284–R408.

This sequence belongs to the two pore domain potassium channel (TC 1.A.1.8) family. In terms of assembly, homodimer. Heterodimer with KCNK12. In terms of tissue distribution, expressed in microglia (at protein level).

The protein localises to the cell membrane. It catalyses the reaction K(+)(in) = K(+)(out). With respect to regulation, the channel conductance is activated by arachidonic acid and inhibited by Ba(2+) ions, volatile anesthetics such as halothane and antiarrhythmic drugs mexiletine and lidocaine. Insensitive to extracellular pH change. In terms of biological role, k(+) channel that conducts outward rectifying tonic currents potentiated by purinergic signals. Homo- and heterodimerizes to form functional channels with distinct regulatory and gating properties. Contributes most of K(+) currents at the plasma membrane of resting microglia. Maintains a depolarized membrane potential required for proper ramified microglia morphology and phagocytosis, selectively mediating microglial pruning of presynaptic compartments at hippocampal excitatory synapses. Upon local release of ATP caused by neuronal injury or infection, it is potentiated by P2RY12 and P2RX7 receptor signaling and contributes to ATP-triggered K(+) efflux underlying microglial NLRP3 inflammasome assembly and IL1B release. In Homo sapiens (Human), this protein is Potassium channel subfamily K member 13.